Reading from the N-terminus, the 107-residue chain is Large ribosomal subunit protein uL24 (107 aa).

The protein belongs to the universal ribosomal protein uL24 family. Part of the 50S ribosomal subunit.

One of two assembly initiator proteins, it binds directly to the 5'-end of the 23S rRNA, where it nucleates assembly of the 50S subunit. In terms of biological role, one of the proteins that surrounds the polypeptide exit tunnel on the outside of the subunit. The sequence is that of Large ribosomal subunit protein uL24 from Neisseria meningitidis serogroup C (strain 053442).